Here is a 326-residue protein sequence, read N- to C-terminus: Probable major capsid protein gp17 (326 aa).

It belongs to the L5likevirus major capsid protein gp17 family. In terms of assembly, L5 head shells are composed of gp17 subunits that are extensively cross-linked.

Its subcellular location is the virion. The chain is Probable major capsid protein gp17 (17) from Mycobacterium (Mycobacteriophage L5).